A 512-amino-acid polypeptide reads, in one-letter code: MSLLATVLLLWGFTLGPGNTLMLDSGSEPKLWAEPQSLLEPWANLTLVCAVDLPTKVFELIQNGWFLSQVRLETQVLSYRFSLGAITSNNSGIYRCRCGVEPPVDIHLPALNKWTMLSNAVEVTGKEPLPRPLAHADPVDWITPGGLPVYVMCQVAMRGVTYLLRQEGVDGVQKPDVQHKGTAGFLIYKPGNYSCSYLTHAAGEPSEPSDIVTIKMYASQAPPTLCLMGNYLMIYPQKTYETLACKAPRNAAEFQLRQGGKVLKIHGFSPTRDAILYYVNLKELDNPGPFTCRYRMHKYMHVWSEDSKPVELMWSDETLQAPVLTAEPSSRDLEPGSTVQLRCTAPVSGLRFGLQRQGKPELVVVQMLNSSGTEAVFELHNISTIDSGNYSCIYMEQAPPFSGSSSSEPVELRVNGPPPKPRLEALWKSTVHLGQEAIFRCHGHVPRVSMELVREGFKTPFAVASTRSTSAYLKLLFVGPQHAGNYSCRYTALPPFTFESGISDPVEVIVEG.

Residues 1–18 (MSLLATVLLLWGFTLGPG) form the signal peptide. Ig-like V-type domains are found at residues 22–126 (MLDS…VTGK), 127–219 (EPLP…MYAS), 220–312 (QAPP…PVEL), 313–415 (MWSD…LRVN), and 416–512 (GPPP…IVEG). Residues Asn44, Asn89, and Asn192 are each glycosylated (N-linked (GlcNAc...) asparagine). Disulfide bonds link Cys49–Cys96, Cys153–Cys195, Cys245–Cys292, Cys343–Cys392, and Cys441–Cys488. Residues Asn369, Asn381, Asn389, and Asn485 are each glycosylated (N-linked (GlcNAc...) asparagine).

Interacts with CRISP3. As to expression, expressed in the liver hepatocytes of male and female GH transgenic mice and in the liver of female, but not of male, non-transgenic mice.

It is found in the secreted. In Mus musculus (Mouse), this protein is Alpha-1B-glycoprotein (A1bg).